Here is a 131-residue protein sequence, read N- to C-terminus: uncharacterized protein (131 aa).

Helical transmembrane passes span 52-72 (LIMI…FYLV) and 97-117 (SDII…YDVG).

It is found in the membrane. This is an uncharacterized protein from Acanthamoeba polyphaga mimivirus (APMV).